We begin with the raw amino-acid sequence, 133 residues long: Mitochondrial import inner membrane translocase subunit TIM17-3 (133 aa).

4 consecutive transmembrane segments (helical) span residues 15-35, 63-83, 90-105, and 115-128; these read IVNA…VYHF, GGTF…LVRI, WNSI…VLSI, and SAVM…VLNP.

Belongs to the Tim17/Tim22/Tim23 family. As to quaternary structure, component of the TIM17:23 complex at least composed of TIM23, TIM17 and TIM50. The complex interacts with the TIM44 component of the PAM complex. As to expression, expressed in cotyledons, roots, flowers and leaves.

Its subcellular location is the mitochondrion inner membrane. Essential component of the TIM17:23 complex, a complex that mediates the translocation of transit peptide-containing proteins across the mitochondrial inner membrane. Links the inner and outer membranes. This chain is Mitochondrial import inner membrane translocase subunit TIM17-3 (TIM17-3), found in Arabidopsis thaliana (Mouse-ear cress).